Here is a 728-residue protein sequence, read N- to C-terminus: Plakophilin-1 (728 aa).

Positions 1–235 (MNHSPLKTAL…SFGHSRASSK (235 aa)) are required for binding to single stranded DNA. Positions 1–287 (MNHSPLKTAL…ESAKQQVYQL (287 aa)) are required for interaction with EIF4A1. Serine 4 carries the post-translational modification Phosphoserine; by RIPK4. The segment at 48-69 (TVKRQKSKSSQSSTLSHSNRGS) is disordered. Phosphorylation in this region is required for cytoplasmic localization and protein stabilization stretches follow at residues 54 to 69 (SKSSQSSTLSHSNRGS) and 117 to 192 (RFSS…STCS). Serine 119 carries the phosphoserine modification. Serine 120 carries the phosphoserine; by RIPK4 modification. Serine 122 carries the post-translational modification Phosphoserine. Residue serine 143 is modified to Phosphoserine; by RIPK4. Positions 161 to 270 (YCDPRGTLRK…KYQAIGAYYI (110 aa)) are required for WNT-mediated nuclear localization. ARM repeat units lie at residues 244–275 (SGLTIPKAVQYLCSQDEKYQAIGAYYIQHTCF), 276–317 (QDES…NLVF), 318–360 (RSTP…NLSS), 361–412 (TDEL…GCLR), 413–443 (NLSSADAGRQTMRNYSGLIDSLMAYVQNCVA), 505–536 (NYDCPLPEEETNPKGSSWLYHSDAIRTYLNLM), 537–583 (GKSK…IARL), 584–629 (LQSG…SHTG), and 630–694 (NTSN…DMWA).

It belongs to the beta-catenin family. As to quaternary structure, part of a complex that contains DSG3, PKP1, YAP1 and YWHAG; the complex is required for localization of DSG3 and YAP1 to the cell membrane in keratinocytes. Interacts (via N-terminus) with KRT5/CK5, KRT8/CK8 (via rod domain), KRT15/CK15 and KRT18/CK18 (via rod domain) as part of intermediate filaments. Interacts with VIM (via rod domain). Interacts with DSP. Interacts with DES. Interacts with FXR1; the interaction may facilitate the binding of PKP1 to PKP2, PKP3 and DSP mRNA. Interacts (via N-terminus) with EIF4A1; the interaction promotes EIF4A1 recruitment to the cap-dependent translation complex and EIF4A1 ATPase activity. Interacts with TJP1/ZO-1; the interaction facilitates TJP1/ZO-1 localization to the plasma membrane. Interacts (when phosphorylated) with YWHAG; the interaction results in translocation of PKP1 to the cytoplasm and loss of intercellular adhesion in keratinocytes. In terms of processing, phosphorylated by AKT2; required for interaction with YWHAG and subsequent localization away from desmosomes to the cytoplasm. Phosphorylation of Ser-119 by AKT2 promotes PKP1-driven cap-dependent mRNA translation and decreases intercellular adhesion, phosphorylation is promoted by insulin. Phosphorylation by RIPK4 at the N-terminus is required for its role in differentiation of keratinocytes and DSG1 localization at cell junctions. Expressed in undifferentiated keratinocytes of the epidermis at birth, expression increases as differentiation proceeds (at protein level). Expressed in the cervical loop during early tooth differentiation, expression is then present between ameloblasts, at ameloblast-ameloblast junctions and in the stratum intermedium during pre-secretory and secretory stages of tooth development (at protein level).

The protein localises to the nucleus. Its subcellular location is the cytoplasm. The protein resides in the perinuclear region. It localises to the cell junction. It is found in the desmosome. The protein localises to the cell membrane. Its subcellular location is the stress granule. Functionally, a component of desmosome cell-cell junctions which are required for positive regulation of cellular adhesion. Plays a role in desmosome protein expression regulation and localization to the desmosomal plaque, thereby maintaining cell sheet integrity and anchorage of desmosomes to intermediate filaments. Required for localization of DSG3 and YAP1 to the cell membrane in keratinocytes in response to mechanical strain, via the formation of an interaction complex composed of DSG3, YAP1, PKP1 and YWHAG. Positively regulates differentiation of keratinocytes, potentially via promoting localization of DSG1 at desmosome cell junctions. Required for calcium-independent development and maturation of desmosome plaques specifically at lateral cell-cell contacts in differentiating keratinocytes. Plays a role in the maintenance of DSG3 protein abundance, DSG3 clustering and localization of these clusters to the cell membrane in keratinocytes. May also promote keratinocyte proliferation and morphogenesis during postnatal development. Required for tight junction inside-out transepidermal barrier function of the skin, and is thereby involved in neonatal survival possibly via maintenance of hydration levels. Promotes Wnt-mediated proliferation and differentiation of ameloblasts, via facilitating TJP1/ZO-1 localization to tight junctions. Binds single-stranded DNA (ssDNA), and may thereby play a role in sensing DNA damage and promoting cell survival. Positively regulates cap-dependent translation and as a result cell proliferation, via recruitment of EIF4A1 to the initiation complex and promotion of EIF4A1 ATPase activity. Regulates the mRNA stability and protein abundance of desmosome components PKP2, PKP3, DSC2 and DSP, potentially via its interaction with FXR1. This chain is Plakophilin-1 (Pkp1), found in Mus musculus (Mouse).